A 278-amino-acid polypeptide reads, in one-letter code: Ferredoxin--NADP reductase A (278 aa).

The FAD-binding FR-type domain occupies 3–103 (PGYTEETVLE…KRATGTLTIG (101 aa)). FAD-binding positions include 52-55 (RAYS) and threonine 118.

This sequence belongs to the ferredoxin--NADP reductase type 1 family. It depends on FAD as a cofactor.

It carries out the reaction 2 reduced [4Fe-4S]-[ferredoxin] + NADP(+) + H(+) = 2 oxidized [4Fe-4S]-[ferredoxin] + NADPH. Functionally, transports electrons between NADPH and ferredoxin. Can transfer electrons to ferredoxins Fdx2 and Fdx8. Prefers NADPH to NADH. This chain is Ferredoxin--NADP reductase A, found in Sorangium cellulosum (strain So ce56) (Polyangium cellulosum (strain So ce56)).